Consider the following 128-residue polypeptide: RYamide neuropeptides (128 aa).

Positions 1-23 (MHARKLIVVLVYILTVLVSVAVS) are cleaved as a signal peptide. A propeptide spanning residues 26-29 (YTSE) is cleaved from the precursor. Tyrosine 44 carries the post-translational modification Tyrosine amide. Residues 47-63 (GGPSPNNKENKVNIRPR) constitute a propeptide that is removed on maturation. Tyrosine 73 carries the post-translational modification Tyrosine amide. Positions 77-128 (SGWSPNASLVYPVSTPLCGLDEDLSCAYTGISDLYRCTPRKGESEEFTTSSN) are excised as a propeptide.

The protein localises to the secreted. In terms of biological role, neuropeptides RYamide-1 and RYamide-2 are ligands for the G-protein coupled receptor RYa-R. RYamide-2 is the most potent activator of RYa-R. The protein is RYamide neuropeptides of Tribolium castaneum (Red flour beetle).